The following is a 160-amino-acid chain: Lipoprotein signal peptidase (160 aa).

A run of 3 helical transmembrane segments spans residues 13–33 (IYIT…RLII), 72–92 (WFLS…ITKL), and 104–124 (SLII…GFVV). Catalysis depends on residues D125 and D143. A helical membrane pass occupies residues 134 to 154 (WHFATFNIADCSIFIGIIILM).

Belongs to the peptidase A8 family.

Its subcellular location is the cell inner membrane. It carries out the reaction Release of signal peptides from bacterial membrane prolipoproteins. Hydrolyzes -Xaa-Yaa-Zaa-|-(S,diacylglyceryl)Cys-, in which Xaa is hydrophobic (preferably Leu), and Yaa (Ala or Ser) and Zaa (Gly or Ala) have small, neutral side chains.. Its pathway is protein modification; lipoprotein biosynthesis (signal peptide cleavage). In terms of biological role, this protein specifically catalyzes the removal of signal peptides from prolipoproteins. The chain is Lipoprotein signal peptidase from Buchnera aphidicola subsp. Acyrthosiphon pisum (strain APS) (Acyrthosiphon pisum symbiotic bacterium).